The primary structure comprises 400 residues: 3-phenylpropionate/cinnamic acid dioxygenase ferredoxin--NAD(+) reductase component (400 aa).

5–36 (TIIIVGGGQAAAMAAASLRQQGFTGELHLFSD) lines the FAD pocket. NAD(+) is bound at residue 146–174 (SVVIVGAGTIGLELAASATQRGCKATVIE).

This sequence belongs to the bacterial ring-hydroxylating dioxygenase ferredoxin reductase family. As to quaternary structure, this dioxygenase system consists of four proteins: the two subunits of the hydroxylase component (HcaE and HcaF), a ferredoxin (HcaC) and a ferredoxin reductase (HcaD). It depends on FAD as a cofactor.

The catalysed reaction is 2 reduced [2Fe-2S]-[ferredoxin] + NAD(+) + H(+) = 2 oxidized [2Fe-2S]-[ferredoxin] + NADH. It functions in the pathway aromatic compound metabolism; 3-phenylpropanoate degradation. Functionally, part of the multicomponent 3-phenylpropionate dioxygenase, that converts 3-phenylpropionic acid (PP) and cinnamic acid (CI) into 3-phenylpropionate-dihydrodiol (PP-dihydrodiol) and cinnamic acid-dihydrodiol (CI-dihydrodiol), respectively. The sequence is that of 3-phenylpropionate/cinnamic acid dioxygenase ferredoxin--NAD(+) reductase component from Escherichia coli O7:K1 (strain IAI39 / ExPEC).